The following is a 766-amino-acid chain: General transcription and DNA repair factor IIH helicase/translocase subunit XPB2 (766 aa).

The segment at 1-56 (MGNDERKRPTKKMKYGGKDDQKMKNIQNVEDYYDDADEDSRDGEGEEKRRDFTDLE) is disordered. Acidic residues predominate over residues 31-41 (DYYDDADEDSR). Over residues 42–56 (DGEGEEKRRDFTDLE) the composition is skewed to basic and acidic residues. Positions 293–455 (MFGNGRARSG…DLNFLIGPKL (163 aa)) constitute a Helicase ATP-binding domain. Residue 306-313 (LPCGAGKS) coordinates ATP. A DEVH box motif is present at residues 408 to 411 (DEVH). The region spanning 510-676 (RACEFLIRFH…SLPPPDAGSS (167 aa)) is the Helicase C-terminal domain. Residues 739 to 748 (SGRQKSGNQS) show a composition bias toward polar residues. A disordered region spans residues 739-766 (SGRQKSGNQSKKPKDPTKRHNIFKKRYV). Residues 749–765 (KKPKDPTKRHNIFKKRY) carry the Nuclear localization signal motif. Over residues 757 to 766 (RHNIFKKRYV) the composition is skewed to basic residues.

This sequence belongs to the helicase family. RAD25/XPB subfamily. As to quaternary structure, component of the 7-subunit TFIIH core complex composed of XPB, XPD, TFB1/GTF2H1, GTF2H2/P44, TFB4/GTF2H3, TFB2/GTF2H4 and TFB5/GTF2H5, which is active in NER. The core complex associates with the 3-subunit CDK-activating kinase (CAK) module composed of CYCH1/cyclin H1, CDKD and MAT1/At4g30820 to form the 10-subunit holoenzyme (holo-TFIIH) active in transcription. As to expression, expressed ubiquitously.

It is found in the nucleus. It catalyses the reaction Couples ATP hydrolysis with the unwinding of duplex DNA by translocating in the 3'-5' direction.. The catalysed reaction is ATP + H2O = ADP + phosphate + H(+). In terms of biological role, ATP-dependent 3'-5' DNA helicase/translocase; binds dsDNA rather than ssDNA, unzipping it in a translocase rather than classical helicase activity. Component of the general transcription and DNA repair factor IIH (TFIIH) core complex. When complexed to CDK-activating kinase (CAK), involved in RNA transcription by RNA polymerase II. The ATPase activity of XPB/ERCC3, but not its helicase activity, is required for DNA opening; it may wrap around the damaged DNA wedging it open, causing localized melting and twisting that allows XPD/ERCC2 helicase to anchor. The ATP-dependent helicase activity of XPB/ERCC3 may be required for promoter escape. Also involved in transcription-coupled nucleotide excision repair (NER) of damaged DNA. In NER, TFIIH acts by opening DNA around the lesion to allow the excision of the damaged oligonucleotide and its replacement by a new DNA fragment. The structure of the TFIIH transcription complex differs from the NER-TFIIH complex. Partially complements UV sensitivity of a yeast SSL2 mutation. This Arabidopsis thaliana (Mouse-ear cress) protein is General transcription and DNA repair factor IIH helicase/translocase subunit XPB2 (XPB2).